A 352-amino-acid chain; its full sequence is S-adenosylmethionine:tRNA ribosyltransferase-isomerase (352 aa).

Belongs to the QueA family. Monomer.

It localises to the cytoplasm. It catalyses the reaction 7-aminomethyl-7-carbaguanosine(34) in tRNA + S-adenosyl-L-methionine = epoxyqueuosine(34) in tRNA + adenine + L-methionine + 2 H(+). It participates in tRNA modification; tRNA-queuosine biosynthesis. Transfers and isomerizes the ribose moiety from AdoMet to the 7-aminomethyl group of 7-deazaguanine (preQ1-tRNA) to give epoxyqueuosine (oQ-tRNA). In Cupriavidus necator (strain ATCC 17699 / DSM 428 / KCTC 22496 / NCIMB 10442 / H16 / Stanier 337) (Ralstonia eutropha), this protein is S-adenosylmethionine:tRNA ribosyltransferase-isomerase.